The following is a 457-amino-acid chain: Glycerol-3-phosphate acyltransferase 3 (457 aa).

The helical transmembrane segment at 14 to 34 threads the bilayer; that stretch reads WLTLVGSLILLPSAFGLSLGI. A phosphoserine mark is found at Ser68 and Ser77. A run of 2 helical transmembrane segments spans residues 137–157 and 161–181; these read ISPK…CFLL and VTLA…VGQL. The short motif at 229–234 is the HXXXXD motif element; that stretch reads HTSPID. Residues 429-457 are disordered; sequence GNGSPSLALDSSTVDNHGSPEPAFRSESL. Residues 431-444 show a composition bias toward polar residues; it reads GSPSLALDSSTVDN.

The protein belongs to the 1-acyl-sn-glycerol-3-phosphate acyltransferase family.

It is found in the endoplasmic reticulum membrane. The enzyme catalyses sn-glycerol 3-phosphate + an acyl-CoA = a 1-acyl-sn-glycero-3-phosphate + CoA. The catalysed reaction is a 1-acyl-sn-glycero-3-phosphate + an acyl-CoA = a 1,2-diacyl-sn-glycero-3-phosphate + CoA. It catalyses the reaction dodecanoyl-CoA + sn-glycerol 3-phosphate = 1-dodecanoyl-sn-glycerol 3-phosphate + CoA. It carries out the reaction sn-glycerol 3-phosphate + hexadecanoyl-CoA = 1-hexadecanoyl-sn-glycero-3-phosphate + CoA. The enzyme catalyses sn-glycerol 3-phosphate + (9Z)-octadecenoyl-CoA = 1-(9Z-octadecenoyl)-sn-glycero-3-phosphate + CoA. The catalysed reaction is (9Z,12Z)-octadecadienoyl-CoA + sn-glycerol 3-phosphate = 1-(9Z,12Z)-octadecadienoyl-sn-glycero-3-phosphate + CoA. It catalyses the reaction 1-tetradecanoyl-sn-glycerol 3-phosphate + (9Z)-octadecenoyl-CoA = 1-tetradecanoyl-2-(9Z)-octadecenoyl-sn-glycero-3-phosphate + CoA. It carries out the reaction 1-hexadecanoyl-sn-glycero-3-phosphate + (9Z)-octadecenoyl-CoA = 1-hexadecanoyl-2-(9Z-octadecenoyl)-sn-glycero-3-phosphate + CoA. The enzyme catalyses 1-(9Z-octadecenoyl)-sn-glycero-3-phosphate + (9Z)-octadecenoyl-CoA = 1,2-di-(9Z-octadecenoyl)-sn-glycero-3-phosphate + CoA. The catalysed reaction is 1-(6Z,9Z,12Z-octadecatrienoyl)-sn-glycero-3-phosphate + (9Z)-octadecenoyl-CoA = (6Z,9Z,12Z)-octadecatrienoyl-2-(9Z)-octadecenoyl-sn-glycero-3-phosphate + CoA. It catalyses the reaction 1-(9Z,12Z,15Z)-octadecatrienoyl-sn-glycero-3-phosphate + (9Z)-octadecenoyl-CoA = 1-(9Z,12Z,15Z)-octadecatrienoyl-2-(9Z)-octadecenoyl-sn-glycero-3-phosphate + CoA. It carries out the reaction 1-(9Z-octadecenoyl)-sn-glycero-3-phosphate + tetradecanoyl-CoA = 1-(9Z)-octadecenoyl-2-tetradecanoyl-sn-glycero-3-phosphate + CoA. The enzyme catalyses 1-(9Z-octadecenoyl)-sn-glycero-3-phosphate + hexadecanoyl-CoA = 1-(9Z)-octadecenoyl-2-hexadecanoyl-sn-glycero-3-phosphate + CoA. The catalysed reaction is 1-(9Z-octadecenoyl)-sn-glycero-3-phosphate + octadecanoyl-CoA = 1-(9Z-octadecenoyl)-2-octadecanoyl-sn-glycero-3-phosphate + CoA. It catalyses the reaction 1-(9Z-octadecenoyl)-sn-glycero-3-phosphate + (9Z,12Z)-octadecadienoyl-CoA = 1-(9Z)-octadecenoyl-2-(9Z,12Z)-octadecadienoyl-sn-glycero-3-phosphate + CoA. It carries out the reaction 1-(5Z,8Z,11Z,14Z-eicosatetraenoyl)-sn-glycero-3-phosphate + (9Z)-octadecenoyl-CoA = 1-(5Z,8Z,11Z,14Z)-eicosatetraenoyl-2-(9Z)-octadecenoyl-sn-glycero-3-phosphate + CoA. It functions in the pathway glycerolipid metabolism; triacylglycerol biosynthesis. It participates in phospholipid metabolism; CDP-diacylglycerol biosynthesis; CDP-diacylglycerol from sn-glycerol 3-phosphate: step 1/3. In terms of biological role, converts glycerol-3-phosphate to 1-acyl-sn-glycerol-3-phosphate (lysophosphatidic acid or LPA) by incorporating an acyl moiety at the sn-1 position of the glycerol backbone. Also converts LPA into 1,2-diacyl-sn-glycerol-3-phosphate (phosphatidic acid or PA) by incorporating an acyl moiety at the sn-2 position of the glycerol backbone. Protects cells against lipotoxicity. The chain is Glycerol-3-phosphate acyltransferase 3 from Rattus norvegicus (Rat).